The chain runs to 398 residues: MSETIVSEQTVSEFSPASADASQSVKASVGKINLLDLNRQQMRDLFMSMGEKPFRADQVMKWMYHYCCDDFNQMTDINKVFRTKLQEIAEIRAPEVVDEQRSSDGTIKWAILVGGQRVETVYIPEEERATLCVSSQVGCALECKFCSTAQQGFNRNLRVSEIIGQVWRAAKIIGAFKVTGQRPITNVVMMGMGEPLLNLTNVVPAMEIMLDDFGFGLSKRRVTLSTSGVVPALDKLGDMIDVALAISLHAPTDDIRNEIMPINKKYNIEMFLSAVRRYLEKSNANQGRVTVEYVMLDHINDGTEHAHQLAECLKDTPCKINLIPWNPFPGAPYGRSSNSRVDRFSKVLMEYGFTTIVRKTRGDDIDAACGQLAGEVVDRTKRTLKKKMAGEPIAVKAV.

Catalysis depends on Glu119, which acts as the Proton acceptor. Residues 125-364 (EEERATLCVS…TIVRKTRGDD (240 aa)) enclose the Radical SAM core domain. Cys132 and Cys369 are oxidised to a cystine. The [4Fe-4S] cluster site is built by Cys139, Cys143, and Cys146. S-adenosyl-L-methionine-binding positions include 193-194 (GE), Ser225, 247-249 (SLH), and Asn326. Cys369 (S-methylcysteine intermediate) is an active-site residue.

Belongs to the radical SAM superfamily. RlmN family. It depends on [4Fe-4S] cluster as a cofactor.

The protein localises to the cytoplasm. It catalyses the reaction adenosine(2503) in 23S rRNA + 2 reduced [2Fe-2S]-[ferredoxin] + 2 S-adenosyl-L-methionine = 2-methyladenosine(2503) in 23S rRNA + 5'-deoxyadenosine + L-methionine + 2 oxidized [2Fe-2S]-[ferredoxin] + S-adenosyl-L-homocysteine. It carries out the reaction adenosine(37) in tRNA + 2 reduced [2Fe-2S]-[ferredoxin] + 2 S-adenosyl-L-methionine = 2-methyladenosine(37) in tRNA + 5'-deoxyadenosine + L-methionine + 2 oxidized [2Fe-2S]-[ferredoxin] + S-adenosyl-L-homocysteine. Its function is as follows. Specifically methylates position 2 of adenine 2503 in 23S rRNA and position 2 of adenine 37 in tRNAs. m2A2503 modification seems to play a crucial role in the proofreading step occurring at the peptidyl transferase center and thus would serve to optimize ribosomal fidelity. This Pectobacterium atrosepticum (strain SCRI 1043 / ATCC BAA-672) (Erwinia carotovora subsp. atroseptica) protein is Dual-specificity RNA methyltransferase RlmN.